A 344-amino-acid chain; its full sequence is Lipase chaperone (344 aa).

A helical transmembrane segment spans residues 14-34 (AAIYGGVGLAAVAGVAMWSGA).

This sequence belongs to the lipase chaperone family.

Its subcellular location is the cell inner membrane. Functionally, may be involved in the folding of the extracellular lipase during its passage through the periplasm. The sequence is that of Lipase chaperone from Burkholderia cenocepacia (strain ATCC BAA-245 / DSM 16553 / LMG 16656 / NCTC 13227 / J2315 / CF5610) (Burkholderia cepacia (strain J2315)).